A 587-amino-acid chain; its full sequence is Transport inhibitor response 1-like protein Os05g0150500 (587 aa).

An F-box domain is found at 6 to 63; that stretch reads SRAACAAAAPPWHSLPDEVWEHAFSFLPAAADRGAAAGACSSWLRAERRSRRRLAVAN. K85 is a 1D-myo-inositol hexakisphosphate binding site. The interaction with auxin-responsive proteins stretch occupies residues 92-93; that stretch reads DF. 1D-myo-inositol hexakisphosphate contacts are provided by residues 124 to 125 and R355; that span reads KR. The segment at 358–363 is interaction with auxin-responsive proteins; it reads PSDPFG. 409–411 is a binding site for 1D-myo-inositol hexakisphosphate; sequence CFR. The tract at residues 413–417 is interaction with auxin-responsive proteins; sequence CILEP. R444 contributes to the 1D-myo-inositol hexakisphosphate binding site. The tract at residues 472-473 is interaction with auxin-responsive proteins; it reads AF. Residues 492-493 and R517 contribute to the 1D-myo-inositol hexakisphosphate site; that span reads KK.

In terms of assembly, part of a SCF (SKP1-cullin-F-box) protein ligase complex. May interact with auxin and auxin-responsive proteins.

Its subcellular location is the nucleus. Its pathway is protein modification; protein ubiquitination. This Oryza sativa subsp. japonica (Rice) protein is Transport inhibitor response 1-like protein Os05g0150500.